The chain runs to 342 residues: Biotin synthase (342 aa).

The Radical SAM core domain occupies 55–274; that stretch reads NAVQCNQLLN…IALARIMMPK (220 aa). Cysteine 70, cysteine 74, and cysteine 77 together coordinate [4Fe-4S] cluster. [2Fe-2S] cluster-binding residues include cysteine 114, cysteine 145, cysteine 205, and arginine 278.

The protein belongs to the radical SAM superfamily. Biotin synthase family. Homodimer. It depends on [4Fe-4S] cluster as a cofactor. [2Fe-2S] cluster is required as a cofactor.

It carries out the reaction (4R,5S)-dethiobiotin + (sulfur carrier)-SH + 2 reduced [2Fe-2S]-[ferredoxin] + 2 S-adenosyl-L-methionine = (sulfur carrier)-H + biotin + 2 5'-deoxyadenosine + 2 L-methionine + 2 oxidized [2Fe-2S]-[ferredoxin]. It functions in the pathway cofactor biosynthesis; biotin biosynthesis; biotin from 7,8-diaminononanoate: step 2/2. Its function is as follows. Catalyzes the conversion of dethiobiotin (DTB) to biotin by the insertion of a sulfur atom into dethiobiotin via a radical-based mechanism. This chain is Biotin synthase, found in Rhodopseudomonas palustris (strain BisB5).